The primary structure comprises 2417 residues: Protein pad-1 (2417 aa).

Disordered regions lie at residues 409–437 (SSNSSSLKKSPRKIQQSLKNPRKPGDREG), 449–475 (SNKDDDVTSVTSSAAANASSAPPPDEE), 994–1029 (TSTGEDSGDPSAAGAAGILRSSSPDPDVVPAFDDDT), and 1957–2032 (SMSN…RRDP). Low complexity-rich tracts occupy residues 456-468 (TSVTSSAAANASS) and 1002-1024 (DPSAAGAAGILRSSSPDPDVVPA). The segment covering 1969–1982 (DNPSGSTRNSTLSL) has biased composition (polar residues). Positions 2003–2014 (SKSENMKIEKKS) are enriched in basic and acidic residues. The span at 2015-2025 (SSNLRASIKDT) shows a compositional bias: polar residues.

This sequence belongs to the DOP1 family.

Functionally, may be involved in protein traffic between late Golgi and early endosomes. Essential for cell patterning during gastrulation. The protein is Protein pad-1 (pad-1) of Caenorhabditis elegans.